A 35-amino-acid polypeptide reads, in one-letter code: Mu-theraphotoxin-Hhn1a (35 aa).

3 disulfide bridges follow: cysteine 2/cysteine 17, cysteine 9/cysteine 24, and cysteine 16/cysteine 31.

Belongs to the neurotoxin 10 (Hwtx-1) family. 22 (Htx-4) subfamily. As to quaternary structure, monomer. In terms of tissue distribution, expressed by the venom gland.

Its subcellular location is the secreted. Its function is as follows. Inhibits selectively tetrodotoxin-sensitive voltage-gated sodium channels (Nav). Does not act by binding to receptor site 3 to slow the inactivation kinetics of sodium currents. The sequence is that of Mu-theraphotoxin-Hhn1a from Cyriopagopus hainanus (Chinese bird spider).